A 1899-amino-acid chain; its full sequence is Protocadherin-15 (1899 aa).

The N-terminal stretch at 1–26 (MLQQFCLWKWLAVGIAVATILASSLA) is a signal peptide. Residues 27 to 1376 (QNDEDCKLAR…AQAVGYTEGA (1350 aa)) are Extracellular-facing. An intrachain disulfide couples Cys32 to Cys120. Cadherin domains lie at 38–147 (GPPA…SPQF), 148–265 (QQQR…GPMF), 278–395 (RPLT…KPYF), 396–509 (TKST…SPTF), 510–616 (SNIS…PPRF), 617–717 (PQLM…GPVF), 719–819 (MFLP…SPVF), 820–926 (TNAS…SPVF), 927–1035 (SKTL…IPRF), 1037–1144 (QDEY…APVF), and 1145–1259 (TKKM…PPTL). A helical membrane pass occupies residues 1377–1397 (LLALAVIIILCCMPAILIVMV). Residues 1398-1899 (SYRQRQAECA…KRFPSQSTAL (502 aa)) are Cytoplasmic-facing. Disordered regions lie at residues 1668 to 1687 (SPCL…VVEP), 1700 to 1721 (HDYP…SFRI), and 1734 to 1820 (TKGE…RREL). 2 stretches are compositionally biased toward pro residues: residues 1706–1717 (LSPPPTRKPTPP) and 1743–1773 (PDPP…PPTL). The segment covering 1774–1791 (PLASVPSSSSLPSTQHLS) has biased composition (low complexity). Residues 1804–1814 (AVPPPAAVPEP) show a composition bias toward pro residues.

As to expression, in the utricle, localizes to the distal region of the kinocilium and near the tips of the stereocilia.

It localises to the cell membrane. Calcium-dependent cell-adhesion protein. Required for inner ear neuroepithelial cell elaboration and cochlear function. Probably involved in the maintenance of normal retinal function. This Gallus gallus (Chicken) protein is Protocadherin-15 (Pcdh15).